The following is a 635-amino-acid chain: Phosphatidylserine decarboxylase proenzyme 2 (635 aa).

The region spanning 20 to 146 (KLQKFRIHRR…VVQEPESTCK (127 aa)) is the C2 domain. EF-hand domains lie at 174–209 (TERR…FGNL) and 210–245 (VAAN…QQEQ). The Ca(2+) site is built by Asp-187, Asn-189, Asp-191, Gln-193, Glu-198, Asp-223, Asn-225, Asp-227, and Glu-234. Residues Asp-443, His-499, and Ser-587 each act as charge relay system; for autoendoproteolytic cleavage activity in the active site. Residue Ser-587 is the Schiff-base intermediate with substrate; via pyruvic acid; for decarboxylase activity of the active site. At Ser-587 the chain carries Pyruvic acid (Ser); by autocatalysis.

This sequence belongs to the phosphatidylserine decarboxylase family. PSD-B subfamily. Eukaryotic type II sub-subfamily. As to quaternary structure, heterodimer of a large membrane-associated beta subunit and a small pyruvoyl-containing alpha subunit. The cofactor is pyruvate. Is synthesized initially as an inactive proenzyme. Formation of the active enzyme involves a self-maturation process in which the active site pyruvoyl group is generated from an internal serine residue via an autocatalytic post-translational modification. Two non-identical subunits are generated from the proenzyme in this reaction, and the pyruvate is formed at the N-terminus of the alpha chain, which is derived from the carboxyl end of the proenzyme. The autoendoproteolytic cleavage occurs by a canonical serine protease mechanism, in which the side chain hydroxyl group of the serine supplies its oxygen atom to form the C-terminus of the beta chain, while the remainder of the serine residue undergoes an oxidative deamination to produce ammonia and the pyruvoyl prosthetic group on the alpha chain. During this reaction, the Ser that is part of the protease active site of the proenzyme becomes the pyruvoyl prosthetic group, which constitutes an essential element of the active site of the mature decarboxylase. In terms of tissue distribution, highly expressed in flowers and at lower levels in leaves.

The protein resides in the vacuole membrane. It carries out the reaction a 1,2-diacyl-sn-glycero-3-phospho-L-serine + H(+) = a 1,2-diacyl-sn-glycero-3-phosphoethanolamine + CO2. Its pathway is phospholipid metabolism; phosphatidylethanolamine biosynthesis; phosphatidylethanolamine from CDP-diacylglycerol: step 2/2. Functionally, catalyzes the formation of phosphatidylethanolamine (PtdEtn) from phosphatidylserine (PtdSer). Plays a central role in phospholipid metabolism and in the interorganelle trafficking of phosphatidylserine. Contributes only to a minor proportion of PtdEtn production. This chain is Phosphatidylserine decarboxylase proenzyme 2 (PSD2), found in Arabidopsis thaliana (Mouse-ear cress).